The chain runs to 463 residues: Retinoic acid receptor RXR-gamma (463 aa).

The interval 1 to 138 (MYGNYSHFMK…TSPGSLVKHI (138 aa)) is modulating. The interval 18-53 (SPGHTGSTSMSPSAALSTGKPMDSHPSYTDTPVSAP) is disordered. A compositionally biased stretch (polar residues) spans 21–33 (HTGSTSMSPSAAL). A DNA-binding region (nuclear receptor) is located at residues 136–211 (KHICAICGDR…MGMKREAVQE (76 aa)). NR C4-type zinc fingers lie at residues 139 to 159 (CAIC…CEGC) and 175 to 199 (CRDN…YQKC). Residues 205 to 230 (KREAVQEERQRSRERAESEAECATSG) are hinge. The NR LBD domain maps to 231-459 (HEDMPVERIL…TFLMEMLETP (229 aa)).

The protein belongs to the nuclear hormone receptor family. NR2 subfamily. Homodimer. Heterodimer with a RAR molecule. Binds DNA preferentially as a RAR/RXR heterodimer. Interacts with RARA. In terms of processing, acetylated by EP300. As to expression, expressed in aortic endothelial cells (at protein level).

The protein localises to the nucleus. It is found in the cytoplasm. Functionally, receptor for retinoic acid. Retinoic acid receptors bind as heterodimers to their target response elements in response to their ligands, all-trans or 9-cis retinoic acid, and regulate gene expression in various biological processes. The RAR/RXR heterodimers bind to the retinoic acid response elements (RARE) composed of tandem 5'-AGGTCA-3' sites known as DR1-DR5. The high affinity ligand for RXRs is 9-cis retinoic acid. This chain is Retinoic acid receptor RXR-gamma (RXRG), found in Homo sapiens (Human).